The primary structure comprises 383 residues: Putative F-box protein At4g09190 (383 aa).

The region spanning 16–67 (RSQREHIPLDLIVEIVSSLPAKSIVRFRSVSKLWSSIITTPDFTSSVVTRSL) is the F-box domain.

This chain is Putative F-box protein At4g09190, found in Arabidopsis thaliana (Mouse-ear cress).